A 401-amino-acid chain; its full sequence is Phosphoglycerate kinase (401 aa).

Residues 29–31 (DFN), Arg45, 69–72 (HLGR), Arg125, and Arg158 each bind substrate. ATP-binding positions include Lys209, Glu331, and 357–360 (GGDT).

The protein belongs to the phosphoglycerate kinase family. As to quaternary structure, monomer.

Its subcellular location is the cytoplasm. The catalysed reaction is (2R)-3-phosphoglycerate + ATP = (2R)-3-phospho-glyceroyl phosphate + ADP. The protein operates within carbohydrate degradation; glycolysis; pyruvate from D-glyceraldehyde 3-phosphate: step 2/5. In Wolinella succinogenes (strain ATCC 29543 / DSM 1740 / CCUG 13145 / JCM 31913 / LMG 7466 / NCTC 11488 / FDC 602W) (Vibrio succinogenes), this protein is Phosphoglycerate kinase.